The following is a 382-amino-acid chain: Cell division protein DivIB (382 aa).

The Cytoplasmic segment spans residues 1–103; the sequence is MAKDKEKQSD…SATQIAFQKS (103 aa). Basic and acidic residues-rich tracts occupy residues 36–49 and 60–70; these read EKKL…DKKA and VELKTDEKTDS. The interval 36-92 is disordered; that stretch reads EKKLKEKLLSDKKAQQQAQNASEAVELKTDEKTDSQEIESETTSKPKKTKKVRQPKE. The helical transmembrane segment at 104–124 threads the bilayer; sequence LPVLLGALLLMAVSIFMITPY. A POTRA domain is found at 125–196; it reads SKKKEFSVRG…NHFLFNVIEF (72 aa). At 125–382 the chain is on the extracellular side; that stretch reads SKKKEFSVRG…PETVLEQAHG (258 aa). Residues 322-382 are disordered; the sequence is QEIENQPEVP…PETVLEQAHG (61 aa). The span at 338 to 352 shows a compositional bias: basic and acidic residues; that stretch reads AADKEGDKPGEHQEQ.

The protein belongs to the FtsQ/DivIB family. DivIB subfamily.

It is found in the cell membrane. Functionally, cell division protein that may be involved in stabilizing or promoting the assembly of the division complex. In Streptococcus pyogenes serotype M2 (strain MGAS10270), this protein is Cell division protein DivIB.